We begin with the raw amino-acid sequence, 687 residues long: uncharacterized protein (687 aa).

The segment covering 277 to 295 has biased composition (low complexity); sequence SVCSSQSFSSGQSDISMSS. 3 disordered regions span residues 277 to 337, 342 to 361, and 531 to 564; these read SVCS…QDCD, DTES…SEMP, and HVEQ…PSLI. Positions 300–313 are enriched in polar residues; it reads NGSSVGNGSLSPMT.

This is an uncharacterized protein from Caenorhabditis elegans.